Consider the following 100-residue polypeptide: UPF0213 protein YhbQ (100 aa).

A GIY-YIG domain is found at 2–77 (TPWYLYLIRT…KQLTKRQKER (76 aa)).

This sequence belongs to the UPF0213 family.

This Salmonella arizonae (strain ATCC BAA-731 / CDC346-86 / RSK2980) protein is UPF0213 protein YhbQ.